A 272-amino-acid chain; its full sequence is Dermonecrotic toxin LvSicTox-alphaIC1biii (272 aa).

The active site involves His5. Mg(2+)-binding residues include Glu25 and Asp27. His41 (nucleophile) is an active-site residue. 2 disulfides stabilise this stretch: Cys45–Cys51 and Cys47–Cys189. A Mg(2+)-binding site is contributed by Asp84.

The protein belongs to the arthropod phospholipase D family. Class II subfamily. Requires Mg(2+) as cofactor. Expressed by the venom gland.

It is found in the secreted. The catalysed reaction is an N-(acyl)-sphingosylphosphocholine = an N-(acyl)-sphingosyl-1,3-cyclic phosphate + choline. The enzyme catalyses an N-(acyl)-sphingosylphosphoethanolamine = an N-(acyl)-sphingosyl-1,3-cyclic phosphate + ethanolamine. It catalyses the reaction a 1-acyl-sn-glycero-3-phosphocholine = a 1-acyl-sn-glycero-2,3-cyclic phosphate + choline. It carries out the reaction a 1-acyl-sn-glycero-3-phosphoethanolamine = a 1-acyl-sn-glycero-2,3-cyclic phosphate + ethanolamine. Its function is as follows. Dermonecrotic toxins cleave the phosphodiester linkage between the phosphate and headgroup of certain phospholipids (sphingolipid and lysolipid substrates), forming an alcohol (often choline) and a cyclic phosphate. This toxin acts on sphingomyelin (SM). It may also act on ceramide phosphoethanolamine (CPE), lysophosphatidylcholine (LPC) and lysophosphatidylethanolamine (LPE), but not on lysophosphatidylserine (LPS), and lysophosphatidylglycerol (LPG). It acts by transphosphatidylation, releasing exclusively cyclic phosphate products as second products. Induces dermonecrosis, hemolysis, increased vascular permeability, edema, inflammatory response, and platelet aggregation. The chain is Dermonecrotic toxin LvSicTox-alphaIC1biii from Loxosceles variegata (Recluse spider).